A 158-amino-acid chain; its full sequence is Protein-export protein SecB (158 aa).

This sequence belongs to the SecB family. As to quaternary structure, homotetramer, a dimer of dimers. One homotetramer interacts with 1 SecA dimer.

Its subcellular location is the cytoplasm. One of the proteins required for the normal export of preproteins out of the cell cytoplasm. It is a molecular chaperone that binds to a subset of precursor proteins, maintaining them in a translocation-competent state. It also specifically binds to its receptor SecA. The polypeptide is Protein-export protein SecB (Photorhabdus laumondii subsp. laumondii (strain DSM 15139 / CIP 105565 / TT01) (Photorhabdus luminescens subsp. laumondii)).